A 181-amino-acid chain; its full sequence is Calmodulin-like protein 6 (181 aa).

4 EF-hand domains span residues 33-68, 69-104, 107-142, and 143-178; these read EQIKEYKGVFEMFDEEGNGEVKTGELEWLMSLLGIN, PTKSELASMAKDVDRDNKGFFNCDGFLALMGVYHEK, NQESELRAAFRVFDKEGKGYIDWNTLKYVLMNAGEP, and LNEVEAEQMMKEADKDGDRTIDYEEFVAMMTGESFK. Residues D156, D158, D160, T162, and E167 each contribute to the Ca(2+) site.

The protein belongs to the calmodulin family. Calglandulin subfamily. Expressed in prostate, thymus, heart, skeleton muscle, bone marrow and ovary.

Its subcellular location is the cytoplasm. It localises to the nucleus. In Homo sapiens (Human), this protein is Calmodulin-like protein 6 (CALML6).